Reading from the N-terminus, the 535-residue chain is Inositol 1,4,5-trisphosphate receptor-interacting protein-like 2 (535 aa).

A signal peptide spans 1-32 (MSVRYTLNLRVFWPLVTGLCTALVCLYHALRS). The Extracellular segment spans residues 33–43 (SEDARAESPDG). Residues 44–64 (ADSGFPLLKVAILLLLGYILL) form a helical membrane-spanning segment. The Cytoplasmic segment spans residues 65–535 (RCRHAIRQRL…RIQGSPEDEP (471 aa)). Serine 139 carries the phosphoserine modification.

This sequence belongs to the ITPRIP family.

Its subcellular location is the membrane. In Mus musculus (Mouse), this protein is Inositol 1,4,5-trisphosphate receptor-interacting protein-like 2 (Itpripl2).